Reading from the N-terminus, the 191-residue chain is 2-amino-4-hydroxy-6-hydroxymethyldihydropteridine pyrophosphokinase (191 aa).

Belongs to the HPPK family.

The enzyme catalyses 6-hydroxymethyl-7,8-dihydropterin + ATP = (7,8-dihydropterin-6-yl)methyl diphosphate + AMP + H(+). Its pathway is cofactor biosynthesis; tetrahydrofolate biosynthesis; 2-amino-4-hydroxy-6-hydroxymethyl-7,8-dihydropteridine diphosphate from 7,8-dihydroneopterin triphosphate: step 4/4. Functionally, catalyzes the transfer of pyrophosphate from adenosine triphosphate (ATP) to 6-hydroxymethyl-7,8-dihydropterin, an enzymatic step in folate biosynthesis pathway. This chain is 2-amino-4-hydroxy-6-hydroxymethyldihydropteridine pyrophosphokinase (folK), found in Mycobacterium leprae (strain TN).